The following is a 374-amino-acid chain: GDSL esterase/lipase 1 (374 aa).

Residues 1 to 25 form the signal peptide; the sequence is MENSQLVSITFLAYTIIISIGSINC. An N-linked (GlcNAc...) asparagine glycan is attached at Asn34. Ser44 serves as the catalytic Nucleophile. Asn184, Asn203, and Asn330 each carry an N-linked (GlcNAc...) asparagine glycan. Residues Asp338 and His341 each act as charge relay system in the active site. Asn360 carries N-linked (GlcNAc...) asparagine glycosylation.

The protein belongs to the 'GDSL' lipolytic enzyme family.

It localises to the secreted. Functionally, confers resistance to the necrotrophic fungus Alternaria brassicicola. Possesses lipase and antimicrobial activities that directly disrupt fungal spore integrity. Triggers systemic resistance, mostly by the ethylene-dependent pathway. The polypeptide is GDSL esterase/lipase 1 (Arabidopsis thaliana (Mouse-ear cress)).